The following is a 379-amino-acid chain: Probable RNA methyltransferase RB6963 (379 aa).

The active-site Proton acceptor is the Glu-89. The 237-residue stretch at 96 to 332 (ATGRTTLCVS…VRYSLGNDIE (237 aa)) folds into the Radical SAM core domain. Cys-103 and Cys-335 are joined by a disulfide. [4Fe-4S] cluster-binding residues include Cys-110, Cys-114, and Cys-117. S-adenosyl-L-methionine-binding positions include 160–161 (GE), Ser-192, 215–217 (SLH), and Asn-291. Cys-335 (S-methylcysteine intermediate) is an active-site residue.

This sequence belongs to the radical SAM superfamily. RlmN family. The cofactor is [4Fe-4S] cluster.

Its subcellular location is the cytoplasm. This Rhodopirellula baltica (strain DSM 10527 / NCIMB 13988 / SH1) protein is Probable RNA methyltransferase RB6963.